We begin with the raw amino-acid sequence, 361 residues long: Tyrosine--tRNA ligase (361 aa).

L-tyrosine-binding residues include Y36, Y162, Q166, D169, and Q184. The short motif at 235–239 (KMSKS) is the 'KMSKS' region element. K238 contacts ATP.

This sequence belongs to the class-I aminoacyl-tRNA synthetase family. TyrS type 4 subfamily. In terms of assembly, homodimer.

It is found in the cytoplasm. The catalysed reaction is tRNA(Tyr) + L-tyrosine + ATP = L-tyrosyl-tRNA(Tyr) + AMP + diphosphate + H(+). Catalyzes the attachment of tyrosine to tRNA(Tyr) in a two-step reaction: tyrosine is first activated by ATP to form Tyr-AMP and then transferred to the acceptor end of tRNA(Tyr). In Sulfolobus acidocaldarius (strain ATCC 33909 / DSM 639 / JCM 8929 / NBRC 15157 / NCIMB 11770), this protein is Tyrosine--tRNA ligase.